Here is a 315-residue protein sequence, read N- to C-terminus: Putative methyltransferase NSUN5C (315 aa).

S-adenosyl-L-methionine is bound by residues 50–56 (VPPQAIK), D74, R79, and D121. The active-site Nucleophile is the C175. The tract at residues 245-269 (TSASQAKASAPERTPSPAPKRKKRA) is disordered.

The protein belongs to the class I-like SAM-binding methyltransferase superfamily. RsmB/NOP family. In terms of tissue distribution, ubiquitous.

May have S-adenosyl-L-methionine-dependent methyl-transferase activity. The sequence is that of Putative methyltransferase NSUN5C (NSUN5P2) from Homo sapiens (Human).